Consider the following 103-residue polypeptide: MAETPTVKLKGKDRIVVWPAYFDADRSRSEGRKVPKRLAVRNPRLTELRHIAEKLGLNPKVQRDKRYPKRWWDDKGRLIVDKVESKRKTLLMIAEKLKERRES.

Belongs to the SRP19 family. Part of the signal recognition particle protein translocation system, which is composed of SRP and FtsY. Archaeal SRP consists of a 7S RNA molecule of 300 nucleotides and two protein subunits: SRP54 and SRP19.

The protein localises to the cytoplasm. Its function is as follows. Involved in targeting and insertion of nascent membrane proteins into the cytoplasmic membrane. Binds directly to 7S RNA and mediates binding of the 54 kDa subunit of the SRP. This is Signal recognition particle 19 kDa protein from Methanopyrus kandleri (strain AV19 / DSM 6324 / JCM 9639 / NBRC 100938).